The following is a 152-amino-acid chain: MVILEQTHLVKNKTVDNKKSMKYSIFQQALTIAVILLISKIIESFMPIPMPASVIGLVLLFIALCTGIVKLGQVETVGTALTNNIGFLFVPAGISVINSLPILKQSPILIILLIIISTLLLLICTGFASQLLVTKSLFPSKEKNEETSHVGG.

A run of 4 helical transmembrane segments spans residues 23–43 (YSIF…KIIE), 45–65 (FMPI…IALC), 77–97 (VGTA…ISVI), and 108–128 (ILII…TGFA).

The protein belongs to the CidA/LrgA family. LrgA subfamily.

Its subcellular location is the cell membrane. Functionally, inhibits the expression or activity of extracellular murein hydrolases by interacting, possibly with LrgB, with the holin-like proteins CidA and/or CidB. The LrgAB and CidAB proteins may affect the proton motive force of the membrane. May be involved in programmed cell death (PCD), possibly triggering PCD in response to antibiotics and environmental stresses. The protein is Antiholin-like protein LrgA of Staphylococcus epidermidis (strain ATCC 35984 / DSM 28319 / BCRC 17069 / CCUG 31568 / BM 3577 / RP62A).